The primary structure comprises 1093 residues: GPI ethanolamine phosphate transferase 3, catalytic subunit (1093 aa).

The chain crosses the membrane as a helical span at residues 4–24 (VSVLLFLAWVCFLFYAGIALF). N-linked (GlcNAc...) asparagine glycosylation is present at asparagine 268. The next 9 helical transmembrane spans lie at 460-480 (AAACLLCLLASQLAVAPGFLF), 483-503 (LLLIPVAWGLTWTILYAGVSV), 512-532 (VVLGAVAAAGSLLPFLWKAWV), 669-689 (LWYGACVGALVALLVVVRLWL), 702-722 (VLFVRWGMPLMVLGTAAYWAL), 748-768 (VMGLAALGLVLLLWRPVTVLV), 831-851 (SVYSAAMVTALLLLAFPLMLL), 856-876 (VSLVFLLLFLQSFLLLHLLAA), and 945-965 (FASHLLFAVGCPLLLLWPFLC). The disordered stretch occupies residues 971–991 (KRRQPLPGSESEARVRPEEEE). A run of 2 helical transmembrane segments spans residues 1018–1038 (LKYLFILGAQILACALAASIL) and 1052–1072 (FIFEAVGFIVSSVGLLLGIAL).

It belongs to the PIGG/PIGN/PIGO family. PIGO subfamily. In terms of assembly, forms the ethanolamine phosphate transferase 3 complex composed by PIGO and PIGF. PIGF is required to stabilize PIGO.

Its subcellular location is the endoplasmic reticulum membrane. The protein operates within glycolipid biosynthesis; glycosylphosphatidylinositol-anchor biosynthesis. Catalytic subunit of the ethanolamine phosphate transferase 3 complex that transfers an ethanolamine phosphate (EtNP) from a phosphatidylethanolamine (PE) to the 6-OH position of the third alpha-1,2-linked mannose of the an alpha-D-Man-(1-&gt;2)-alpha-D-Man-(1-&gt;6)-2-PEtn-alpha-D-Man-(1-&gt;4)-alpha-D-GlcN-(1-&gt;6)-(1-radyl,2-acyl-sn-glycero-3-phospho)-2-acyl-inositol (also termed H6) intermediate to generate a 6-PEtn-alpha-D-Man-(1-&gt;2)-alpha-D-Man-(1-&gt;6)-2-PEtn-alpha-D-Man-(1-&gt;4)-alpha-D-GlcN-(1-&gt;6)-(1-radyl,2-acyl-sn-glycero-3-phospho)-2-acyl-inositol (also termed H7) and participates in the tenth step of the glycosylphosphatidylinositol-anchor biosynthesis. The polypeptide is GPI ethanolamine phosphate transferase 3, catalytic subunit (Mus musculus (Mouse)).